A 959-amino-acid polypeptide reads, in one-letter code: UPF0182 protein MAE_41360 (959 aa).

9 helical membrane-spanning segments follow: residues 13 to 33, 50 to 70, 99 to 119, 156 to 176, 184 to 204, 239 to 259, 276 to 296, 319 to 339, and 362 to 382; these read PILL…VVAN, LSWQ…FIFT, LLGL…MLLY, DISS…GLLI, IISI…WANF, LWLT…YLFS, LRHL…HHII, VGQF…IWLG, and FFPY…GTII.

Belongs to the UPF0182 family.

The protein resides in the cell membrane. This chain is UPF0182 protein MAE_41360, found in Microcystis aeruginosa (strain NIES-843 / IAM M-2473).